Here is a 296-residue protein sequence, read N- to C-terminus: Phosphatidylglycerol--prolipoprotein diacylglyceryl transferase (296 aa).

Transmembrane regions (helical) follow at residues 17 to 37 (LAVRWYGLMYLVGFILAIVVG), 59 to 79 (MMFYGVLGVVLGGRLGYVLFY), and 97 to 117 (GGMSFHGGFLGVTLAMALFAW). Residue Arg-142 coordinates a 1,2-diacyl-sn-glycero-3-phospho-(1'-sn-glycerol). 2 consecutive transmembrane segments (helical) span residues 230 to 250 (MGAISALFLIGYGAARFTVEF) and 265 to 285 (LSMGQWLSLPMIVAGVLMMIW).

This sequence belongs to the Lgt family.

The protein resides in the cell inner membrane. The enzyme catalyses L-cysteinyl-[prolipoprotein] + a 1,2-diacyl-sn-glycero-3-phospho-(1'-sn-glycerol) = an S-1,2-diacyl-sn-glyceryl-L-cysteinyl-[prolipoprotein] + sn-glycerol 1-phosphate + H(+). It participates in protein modification; lipoprotein biosynthesis (diacylglyceryl transfer). Catalyzes the transfer of the diacylglyceryl group from phosphatidylglycerol to the sulfhydryl group of the N-terminal cysteine of a prolipoprotein, the first step in the formation of mature lipoproteins. In Burkholderia mallei (strain NCTC 10247), this protein is Phosphatidylglycerol--prolipoprotein diacylglyceryl transferase.